A 230-amino-acid chain; its full sequence is Flagellar L-ring protein (230 aa).

The first 18 residues, 1–18 (MNRLNIAVSCLATALLFG), serve as a signal peptide directing secretion. Cys-19 is lipidated: N-palmitoyl cysteine. Residue Cys-19 is the site of S-diacylglycerol cysteine attachment.

Belongs to the FlgH family. The basal body constitutes a major portion of the flagellar organelle and consists of four rings (L,P,S, and M) mounted on a central rod.

Its subcellular location is the cell outer membrane. It localises to the bacterial flagellum basal body. Its function is as follows. Assembles around the rod to form the L-ring and probably protects the motor/basal body from shearing forces during rotation. The sequence is that of Flagellar L-ring protein from Legionella pneumophila (strain Corby).